Here is a 338-residue protein sequence, read N- to C-terminus: Phenylalanine--tRNA ligase alpha subunit (338 aa).

Glu253 is a binding site for Mg(2+).

It belongs to the class-II aminoacyl-tRNA synthetase family. Phe-tRNA synthetase alpha subunit type 1 subfamily. As to quaternary structure, tetramer of two alpha and two beta subunits. Requires Mg(2+) as cofactor.

It is found in the cytoplasm. It catalyses the reaction tRNA(Phe) + L-phenylalanine + ATP = L-phenylalanyl-tRNA(Phe) + AMP + diphosphate + H(+). The chain is Phenylalanine--tRNA ligase alpha subunit from Syntrophus aciditrophicus (strain SB).